The following is a 146-amino-acid chain: Hut operon positive regulatory protein (146 aa).

This sequence belongs to the HutP family. Homohexamer.

In terms of biological role, antiterminator that binds to cis-acting regulatory sequences on the mRNA in the presence of histidine, thereby suppressing transcription termination and activating the hut operon for histidine utilization. The protein is Hut operon positive regulatory protein of Bacillus cereus (strain AH820).